Here is a 900-residue protein sequence, read N- to C-terminus: MGSNKEAKNIDSKNDRGLTSITSNKISNLKAHDNHTSSMITEHKNADKEKGKQEKESRNGTTQSSSSVESHSPQVSHHSDKLSSFDSPLHLPNFRLADDLFSNSSRRSSDSAASSSVSKLKSAQLSKIGLHHHHTSNNKHSHRSGTPTSEVKANYSPDPSAPRFIVSNMVGNGRGGGGLHGATSNVVKKLHSRKKWDWNTLPASDSSLLIKTVSGNHNLINICIDGEFKQIMYDPNHNELFNRMDLFLSFNMDSSPEDSLIFAKKRLRSYIDFLTKYLESRKYAFECYPFNIENIINIETEVKCFPSFDPLKDYSEIESLIQLWLAQSQKFLLQSNSFFFSSEVVEELIKRKPTTRQHSNPTISTTSNKISDPTLYIQQLDIEANSPRPVISDPLDEIDILLIRPLHKTLGGWQLAYDEPSLNIADFALDLSPWMIDSSDNDAQNKNASEIAPEYLTNLQNYLPRKGSRAKIVSDEQEVIELNSSNASEYMYDCMNRKFFTDDAKERISRNNFNQGVEEDPLNDQFASSRSLSLPSSGADAVKRKKSPTKATKKSGFVNFFKRKHSQLASTSHTTSPSVSPSISSSSSPKIQPQSHISSPPRTEKAPHVKSANQAHQNEWLENFFCRTLNNYKEIDLPTQFILPKEVKRSSNAQLQPEDEPPLSSPISSNSDNSFPNEGLDRAKSAAIYGKEYLKLRLPFASDTIPAVICPWVWTSLSYYKWKALLREIYRSIIPGGYALAIVPDLRISNTYYTGILGNADAEKANNSSEEFLTTKERDKTFDAMAIDAINKGLHIHPTKHLTRTFKDVGFTGIKSSVLSLKTGDFKTDMGFLNEFNSLDMWDYMLRRQLPDSSCPPKDTDPTTLFKRYVEEHIGKIDDNAGCFRTLYVVAQKPKLPYTK.

The span at Met-1 to Arg-16 shows a compositional bias: basic and acidic residues. Disordered regions lie at residues Met-1–Ser-84, Asn-103–Ser-160, Asn-512–Gly-556, Leu-568–Asn-613, and Lys-648–Pro-676. Residues Gly-17–Ser-27 show a composition bias toward polar residues. A compositionally biased stretch (basic and acidic residues) spans Lys-30 to Arg-58. 2 stretches are compositionally biased toward low complexity: residues Gln-63–Ser-76 and Asn-103–Lys-127. Ser-105 is modified (phosphoserine). Basic residues predominate over residues Gly-129–Arg-143. Low complexity predominate over residues Ser-528–Ser-537. Residues Lys-543–Lys-553 show a composition bias toward basic residues. Low complexity-rich tracts occupy residues Ser-570–Pro-601 and Ser-665–Pro-676.

This is an uncharacterized protein from Saccharomyces cerevisiae (strain ATCC 204508 / S288c) (Baker's yeast).